Here is an 888-residue protein sequence, read N- to C-terminus: Autophagy-related protein 9 (888 aa).

The disordered stretch occupies residues 1–170; that stretch reads MASNIFSRIK…PYTTPMGPQP (170 aa). Residues 1 to 255 are Cytoplasmic-facing; sequence MASNIFSRIK…CTRKMSGLWN (255 aa). The span at 13–24 shows a compositional bias: polar residues; sequence SGGSQSFYQQLR. Positions 28-38 are enriched in acidic residues; the sequence is DPEYDPGLDEE. The span at 123–143 shows a compositional bias: polar residues; that stretch reads RATNPGSSRTPASVGPSSART. Residues 256-276 form a helical membrane-spanning segment; it reads FAIWLYTFFFIWKCVQYFVEI. Residues 277–422 lie on the Lumenal side of the membrane; it reads RRLTYIRDFY…RLLSQKLRQR (146 aa). The chain crosses the membrane as a helical span at residues 423-443; that stretch reads FLFAGFLNLLFAPVVLAYVVI. Topologically, residues 444–511 are cytoplasmic; the sequence is VYFFTYYYEY…PKRITEAVAR (68 aa). The stretch at 512–532 is an intramembrane region; sequence TIAFMSGAITAILAIGSVLDS. At 533 to 544 the chain is on the cytoplasmic side; sequence ELFLNFEITKDR. A helical membrane pass occupies residues 545–565; that stretch reads PVIFYLGVFAAIWATTRGMVS. At 566-611 the chain is on the lumenal side; the sequence is EETLVFNPEYALRNVIEYTRYVPDHWKNKLHSSEVKQEFSELYKMK. A helical transmembrane segment spans residues 612–632; sequence VVIFLEEMMGIVTTPMLLLFS. The Cytoplasmic portion of the chain corresponds to 633-642; that stretch reads LPRCSDQIVD. The stretch at 643–663 is an intramembrane region; it reads FFREFTIHVDGLGYVCSFAVF. Residues 664-888 lie on the Cytoplasmic side of the membrane; that stretch reads DFQKGPGNTG…QRPRRGGGMV (225 aa). 2 disordered regions span residues 748–770 and 834–866; these read GRTG…PRIG and EPGG…DPEA.

It belongs to the ATG9 family. In terms of assembly, homotrimer; forms a homotrimer with a central pore that forms a path between the two membrane leaflets. In terms of processing, phosphorylated by ATG1. ATG1 phosphorylation is required for ATG18 interaction and preautophagosome elongation.

It is found in the preautophagosomal structure membrane. The protein resides in the cytoplasmic vesicle membrane. Its subcellular location is the golgi apparatus membrane. The protein localises to the endoplasmic reticulum membrane. The catalysed reaction is a 1,2-diacyl-sn-glycero-3-phosphocholine(in) = a 1,2-diacyl-sn-glycero-3-phosphocholine(out). The enzyme catalyses a 1,2-diacyl-sn-glycero-3-phospho-L-serine(in) = a 1,2-diacyl-sn-glycero-3-phospho-L-serine(out). It catalyses the reaction a 1,2-diacyl-sn-glycero-3-phosphoethanolamine(in) = a 1,2-diacyl-sn-glycero-3-phosphoethanolamine(out). It carries out the reaction a 1,2-diacyl-sn-glycero-3-phospho-(1D-myo-inositol-3-phosphate)(in) = a 1,2-diacyl-sn-glycero-3-phospho-(1D-myo-inositol-3-phosphate)(out). Functionally, phospholipid scramblase involved in autophagy and cytoplasm to vacuole transport (Cvt) vesicle formation. Cycles between the preautophagosomal structure/phagophore assembly site (PAS) and the cytoplasmic vesicle pool and supplies membrane for the growing autophagosome. Lipid scramblase activity plays a key role in preautophagosomal structure/phagophore assembly by distributing the phospholipids that arrive through ATG2 from the cytoplasmic to the luminal leaflet of the bilayer, thereby driving autophagosomal membrane expansion. Required for mitophagy. Also involved in endoplasmic reticulum-specific autophagic process and is essential for the survival of cells subjected to severe ER stress. Different machineries are required for anterograde trafficking to the PAS during either the Cvt pathway or bulk autophagy and for retrograde trafficking. Autophagy is required for proper vegetative growth, asexual/sexual reproduction, and full virulence. Autophagy is particularly involved in the biosynthesis of deoxynivalenol (DON), an important virulence determinant. Required for aerial hyphae development and lipid droplet degradation in response to starvation. This Gibberella zeae (strain ATCC MYA-4620 / CBS 123657 / FGSC 9075 / NRRL 31084 / PH-1) (Wheat head blight fungus) protein is Autophagy-related protein 9.